The following is a 316-amino-acid chain: Protease HtpX homolog (316 aa).

Residues 16–36 form a helical membrane-spanning segment; sequence LFMGAGFLIGGATGMMIALVF. H134 lines the Zn(2+) pocket. E135 is an active-site residue. Residue H138 coordinates Zn(2+). 2 helical membrane-spanning segments follow: residues 149 to 169 and 180 to 200; these read VTATIAGAISALANFAFFFGG and LGGMIGAILIAILAPIAAMLV. A Zn(2+)-binding site is contributed by E209. The tract at residues 295 to 316 is disordered; it reads PVMAATTSSSVPLSGERGGPWS.

Belongs to the peptidase M48B family. Zn(2+) is required as a cofactor.

Its subcellular location is the cell inner membrane. This chain is Protease HtpX homolog, found in Caulobacter vibrioides (strain ATCC 19089 / CIP 103742 / CB 15) (Caulobacter crescentus).